Consider the following 194-residue polypeptide: MNIVILLLILTFSIKHSNTYKLKNTYIPINYMYHNNKNILRSQKSKLFLNFLSNNQLANSNKQTCFFKSNIKSSISNIDNYDYIRKRYINTSNKNKLFYNITLRTNDGEKKIECNEDEYILDASERQNVELPYSCRGGSCSTCAAKLVEGEVDNDDQSYLDEEQIKKKYILLCTCYPKSDCVIETHKEDELHDM.

The transit peptide at 1-19 (MNIVILLLILTFSIKHSNT) directs the protein to the apicoplast. One can recognise a 2Fe-2S ferredoxin-type domain in the interval 99–189 (YNITLRTNDG…DCVIETHKED (91 aa)). Residues cysteine 135, cysteine 140, cysteine 143, and cysteine 173 each coordinate [2Fe-2S] cluster.

Belongs to the 2Fe2S plant-type ferredoxin family. [2Fe-2S] cluster serves as cofactor.

Its subcellular location is the plastid. The protein localises to the apicoplast. Its function is as follows. Ferredoxins are iron-sulfur proteins that transfer electrons in a wide variety of metabolic reactions. By transferring electrons to 4-hydroxy-3-methylbut-2-enyl diphosphate reductase LytB/IspH, plays a role in the terminal step of the DOXP/MEP pathway for isoprenoid precursor biosynthesis. This is Ferredoxin, apicoplast from Plasmodium falciparum (isolate 3D7).